The chain runs to 184 residues: Cell number regulator 5 (184 aa).

Residues 91 to 111 (MLWGLLTSLCCVFTGGLVLAV) form a helical membrane-spanning segment. The segment at 162–184 (RTGSGSSPAPNVTPPPVQTMDEL) is disordered.

It belongs to the cornifelin family. In terms of tissue distribution, expressed in roots, leaves, stalks, immature ears, endosperm and pollen.

Its subcellular location is the membrane. This Zea mays (Maize) protein is Cell number regulator 5 (CNR5).